A 249-amino-acid chain; its full sequence is tRNA (guanine-N(1)-)-methyltransferase (249 aa).

Residues Gly-118 and 138 to 143 each bind S-adenosyl-L-methionine; that span reads IGDYVL.

It belongs to the RNA methyltransferase TrmD family. In terms of assembly, homodimer.

The protein resides in the cytoplasm. It catalyses the reaction guanosine(37) in tRNA + S-adenosyl-L-methionine = N(1)-methylguanosine(37) in tRNA + S-adenosyl-L-homocysteine + H(+). In terms of biological role, specifically methylates guanosine-37 in various tRNAs. The chain is tRNA (guanine-N(1)-)-methyltransferase from Alkaliphilus oremlandii (strain OhILAs) (Clostridium oremlandii (strain OhILAs)).